We begin with the raw amino-acid sequence, 315 residues long: Transaldolase (315 aa).

The Schiff-base intermediate with substrate role is filled by K125.

The protein belongs to the transaldolase family. Type 1 subfamily. Homodimer.

The protein localises to the cytoplasm. It carries out the reaction D-sedoheptulose 7-phosphate + D-glyceraldehyde 3-phosphate = D-erythrose 4-phosphate + beta-D-fructose 6-phosphate. The protein operates within carbohydrate degradation; pentose phosphate pathway; D-glyceraldehyde 3-phosphate and beta-D-fructose 6-phosphate from D-ribose 5-phosphate and D-xylulose 5-phosphate (non-oxidative stage): step 2/3. In terms of biological role, transaldolase is important for the balance of metabolites in the pentose-phosphate pathway. This Polaromonas sp. (strain JS666 / ATCC BAA-500) protein is Transaldolase.